The chain runs to 264 residues: Triosephosphate isomerase (264 aa).

12-14 (NWK) is a substrate binding site. Histidine 104 functions as the Electrophile in the catalytic mechanism. Catalysis depends on glutamate 176, which acts as the Proton acceptor. Substrate contacts are provided by residues glycine 182, serine 222, and 243-244 (GG).

The protein belongs to the triosephosphate isomerase family. As to quaternary structure, homodimer.

It localises to the cytoplasm. The catalysed reaction is D-glyceraldehyde 3-phosphate = dihydroxyacetone phosphate. It functions in the pathway carbohydrate biosynthesis; gluconeogenesis. The protein operates within carbohydrate degradation; glycolysis; D-glyceraldehyde 3-phosphate from glycerone phosphate: step 1/1. Functionally, involved in the gluconeogenesis. Catalyzes stereospecifically the conversion of dihydroxyacetone phosphate (DHAP) to D-glyceraldehyde-3-phosphate (G3P). The chain is Triosephosphate isomerase from Bifidobacterium adolescentis (strain ATCC 15703 / DSM 20083 / NCTC 11814 / E194a).